The chain runs to 332 residues: L-lactate dehydrogenase A chain (332 aa).

NAD(+) is bound by residues G29–K57 and R99. Positions 106, 138, and 169 each coordinate substrate. N138 provides a ligand contact to NAD(+). Residue H193 is the Proton acceptor of the active site. T248 contributes to the substrate binding site.

Belongs to the LDH/MDH superfamily. LDH family. In terms of assembly, homotetramer.

It localises to the cytoplasm. The enzyme catalyses (S)-lactate + NAD(+) = pyruvate + NADH + H(+). Its pathway is fermentation; pyruvate fermentation to lactate; (S)-lactate from pyruvate: step 1/1. Interconverts simultaneously and stereospecifically pyruvate and lactate with concomitant interconversion of NADH and NAD(+). This Lycodichthys dearborni (Antarctic eelpout) protein is L-lactate dehydrogenase A chain (ldha).